Here is a 174-residue protein sequence, read N- to C-terminus: CDP-archaeol synthase (174 aa).

Transmembrane regions (helical) follow at residues 51 to 71 (LIGLLQILLAPHIAPYLAGFI), 74 to 94 (SLLVGYSYIALITMPFGALLG), 112 to 132 (MLPIADQLDFVAGAWVLTFLL), and 136 to 156 (WLLANFTIWVAIAVILIIPVF).

It belongs to the CDP-archaeol synthase family. The cofactor is Mg(2+).

It localises to the cell membrane. It catalyses the reaction 2,3-bis-O-(geranylgeranyl)-sn-glycerol 1-phosphate + CTP + H(+) = CDP-2,3-bis-O-(geranylgeranyl)-sn-glycerol + diphosphate. It functions in the pathway membrane lipid metabolism; glycerophospholipid metabolism. In terms of biological role, catalyzes the formation of CDP-2,3-bis-(O-geranylgeranyl)-sn-glycerol (CDP-archaeol) from 2,3-bis-(O-geranylgeranyl)-sn-glycerol 1-phosphate (DGGGP) and CTP. This reaction is the third ether-bond-formation step in the biosynthesis of archaeal membrane lipids. The polypeptide is CDP-archaeol synthase (Methanocella arvoryzae (strain DSM 22066 / NBRC 105507 / MRE50)).